The chain runs to 137 residues: 3-hydroxyacyl-[acyl-carrier-protein] dehydratase FabZ (137 aa).

The active site involves histidine 46.

It belongs to the thioester dehydratase family. FabZ subfamily.

The protein localises to the cytoplasm. It carries out the reaction a (3R)-hydroxyacyl-[ACP] = a (2E)-enoyl-[ACP] + H2O. Involved in unsaturated fatty acids biosynthesis. Catalyzes the dehydration of short chain beta-hydroxyacyl-ACPs and long chain saturated and unsaturated beta-hydroxyacyl-ACPs. The chain is 3-hydroxyacyl-[acyl-carrier-protein] dehydratase FabZ from Thermotoga neapolitana (strain ATCC 49049 / DSM 4359 / NBRC 107923 / NS-E).